A 463-amino-acid chain; its full sequence is A-type ATP synthase subunit B (463 aa).

This sequence belongs to the ATPase alpha/beta chains family. In terms of assembly, has multiple subunits with at least A(3), B(3), C, D, E, F, H, I and proteolipid K(x).

It localises to the cell membrane. Its function is as follows. Component of the A-type ATP synthase that produces ATP from ADP in the presence of a proton gradient across the membrane. The B chain is a regulatory subunit. The sequence is that of A-type ATP synthase subunit B from Aeropyrum pernix (strain ATCC 700893 / DSM 11879 / JCM 9820 / NBRC 100138 / K1).